Consider the following 161-residue polypeptide: 3-isopropylmalate dehydratase small subunit (161 aa).

It belongs to the LeuD family. LeuD type 2 subfamily. In terms of assembly, heterodimer of LeuC and LeuD.

It carries out the reaction (2R,3S)-3-isopropylmalate = (2S)-2-isopropylmalate. It participates in amino-acid biosynthesis; L-leucine biosynthesis; L-leucine from 3-methyl-2-oxobutanoate: step 2/4. Its function is as follows. Catalyzes the isomerization between 2-isopropylmalate and 3-isopropylmalate, via the formation of 2-isopropylmaleate. This Pyrobaculum calidifontis (strain DSM 21063 / JCM 11548 / VA1) protein is 3-isopropylmalate dehydratase small subunit.